A 251-amino-acid polypeptide reads, in one-letter code: Small ribosomal subunit protein uS2 (251 aa).

The residue at position 2 (S2) is an N-acetylserine. Positions 209-251 are disordered; that stretch reads EIEQQTAEEAAQEAGEEEAKEEVTEEQTEAAEWAQENADNVEW. The segment covering 218–237 has biased composition (acidic residues); that stretch reads AAQEAGEEEAKEEVTEEQTE. Residues 238–251 are compositionally biased toward low complexity; sequence AAEWAQENADNVEW.

This sequence belongs to the universal ribosomal protein uS2 family. As to quaternary structure, component of the small ribosomal subunit. Mature ribosomes consist of a small (40S) and a large (60S) subunit. The 40S subunit contains about 33 different proteins and 1 molecule of RNA (18S). The 60S subunit contains about 49 different proteins and 3 molecules of RNA (25S, 5.8S and 5S). Interacts with RPS21.

The protein localises to the cytoplasm. Its function is as follows. Required for the assembly and/or stability of the 40S ribosomal subunit. Required for the processing of the 20S rRNA-precursor to mature 18S rRNA in a late step of the maturation of 40S ribosomal subunits. In Candida glabrata (strain ATCC 2001 / BCRC 20586 / JCM 3761 / NBRC 0622 / NRRL Y-65 / CBS 138) (Yeast), this protein is Small ribosomal subunit protein uS2.